The sequence spans 375 residues: Erythronate-4-phosphate dehydrogenase (375 aa).

Positions 45 and 67 each coordinate substrate. NAD(+) is bound at residue aspartate 147. The active site involves arginine 209. Aspartate 233 is an NAD(+) binding site. Residue glutamate 238 is part of the active site. The Proton donor role is filled by histidine 255. Glycine 258 serves as a coordination point for NAD(+). Residue tyrosine 259 participates in substrate binding.

Belongs to the D-isomer specific 2-hydroxyacid dehydrogenase family. PdxB subfamily. In terms of assembly, homodimer.

It is found in the cytoplasm. It catalyses the reaction 4-phospho-D-erythronate + NAD(+) = (R)-3-hydroxy-2-oxo-4-phosphooxybutanoate + NADH + H(+). It participates in cofactor biosynthesis; pyridoxine 5'-phosphate biosynthesis; pyridoxine 5'-phosphate from D-erythrose 4-phosphate: step 2/5. In terms of biological role, catalyzes the oxidation of erythronate-4-phosphate to 3-hydroxy-2-oxo-4-phosphonooxybutanoate. The chain is Erythronate-4-phosphate dehydrogenase from Shewanella amazonensis (strain ATCC BAA-1098 / SB2B).